Here is a 130-residue protein sequence, read N- to C-terminus: MPATVKKTGSKKSKRNVPNGVVHIQSTFNNTIVSITDTSGHVISWSSAGASGFKGARKGTPFAAQTAAEAAARRALDQGMRQIEVLVRGPGAGRETAIRALQVAGLEITLIRDVTPLPHNGCRRPKRRRV.

This sequence belongs to the universal ribosomal protein uS11 family. In terms of assembly, part of the 30S ribosomal subunit. Interacts with proteins S7 and S18. Binds to IF-3.

Functionally, located on the platform of the 30S subunit, it bridges several disparate RNA helices of the 16S rRNA. Forms part of the Shine-Dalgarno cleft in the 70S ribosome. The sequence is that of Small ribosomal subunit protein uS11 from Prochlorococcus marinus (strain MIT 9301).